Here is a 312-residue protein sequence, read N- to C-terminus: Light-independent protochlorophyllide reductase iron-sulfur ATP-binding protein (312 aa).

ATP contacts are provided by residues 55–60 (GIGKST) and lysine 84. Serine 59 is a Mg(2+) binding site. [4Fe-4S] cluster is bound by residues cysteine 140 and cysteine 174. Residues 225–226 (NR) and 249–251 (PDL) each bind ATP.

This sequence belongs to the NifH/BchL/ChlL family. Homodimer. Protochlorophyllide reductase is composed of three subunits; BchL, BchN and BchB. [4Fe-4S] cluster serves as cofactor.

The catalysed reaction is chlorophyllide a + oxidized 2[4Fe-4S]-[ferredoxin] + 2 ADP + 2 phosphate = protochlorophyllide a + reduced 2[4Fe-4S]-[ferredoxin] + 2 ATP + 2 H2O. It participates in porphyrin-containing compound metabolism; bacteriochlorophyll biosynthesis (light-independent). In terms of biological role, component of the dark-operative protochlorophyllide reductase (DPOR) that uses Mg-ATP and reduced ferredoxin to reduce ring D of protochlorophyllide (Pchlide) to form chlorophyllide a (Chlide). This reaction is light-independent. The L component serves as a unique electron donor to the NB-component of the complex, and binds Mg-ATP. This Rhodopseudomonas palustris (strain BisB18) protein is Light-independent protochlorophyllide reductase iron-sulfur ATP-binding protein.